Reading from the N-terminus, the 1361-residue chain is Xanthine dehydrogenase 1 (1361 aa).

Residues 15–101 (TEALLYVNGV…GMHVISIEGL (87 aa)) enclose the 2Fe-2S ferredoxin-type domain. 8 residues coordinate [2Fe-2S] cluster: Cys53, Cys58, Cys61, Cys83, Cys123, Cys126, Cys159, and Cys161. One can recognise an FAD-binding PCMH-type domain in the interval 257–442 (RGNGGITWYR…LSVFLPWTRP (186 aa)). Residues 285 to 292 (LLVGNTEV), Phe365, 375 to 379 (CIGGN), Asp388, Leu432, and Lys450 each bind FAD. The Mo-molybdopterin site is built by Gln796 and Phe827. Residues Glu831 and Arg909 each coordinate substrate. A Mo-molybdopterin-binding site is contributed by Arg941. Substrate contacts are provided by Phe943 and Thr1039. Ala1108 contributes to the Mo-molybdopterin binding site. Glu1297 acts as the Proton acceptor in catalysis.

This sequence belongs to the xanthine dehydrogenase family. In terms of assembly, homodimer. [2Fe-2S] cluster serves as cofactor. Requires FAD as cofactor. The cofactor is Mo-molybdopterin. Expressed in roots, leaves, stems, flowers and siliques.

The enzyme catalyses xanthine + NAD(+) + H2O = urate + NADH + H(+). It catalyses the reaction hypoxanthine + NAD(+) + H2O = xanthine + NADH + H(+). Key enzyme involved in purine catabolism. Catalyzes the oxidation of hypoxanthine to xanthine and the oxidation of xanthine to urate. Regulates the level of ureides and plays an important role during plant growth and development, senescence and response to stresses. Possesses NADH oxidase activity and may contribute to the generation of superoxide anions in planta. The sequence is that of Xanthine dehydrogenase 1 (XDH1) from Arabidopsis thaliana (Mouse-ear cress).